Consider the following 217-residue polypeptide: Probable transaldolase (217 aa).

The active-site Schiff-base intermediate with substrate is the K83.

This sequence belongs to the transaldolase family. Type 3B subfamily.

It is found in the cytoplasm. The enzyme catalyses D-sedoheptulose 7-phosphate + D-glyceraldehyde 3-phosphate = D-erythrose 4-phosphate + beta-D-fructose 6-phosphate. Its pathway is carbohydrate degradation; pentose phosphate pathway; D-glyceraldehyde 3-phosphate and beta-D-fructose 6-phosphate from D-ribose 5-phosphate and D-xylulose 5-phosphate (non-oxidative stage): step 2/3. Transaldolase is important for the balance of metabolites in the pentose-phosphate pathway. This chain is Probable transaldolase, found in Brucella anthropi (strain ATCC 49188 / DSM 6882 / CCUG 24695 / JCM 21032 / LMG 3331 / NBRC 15819 / NCTC 12168 / Alc 37) (Ochrobactrum anthropi).